The chain runs to 476 residues: Growth/differentiation factor 10 (476 aa).

The N-terminal stretch at 1–29 (MAPGLARISLRSQLLPLVPLLLLLRGAGC) is a signal peptide. Residues 30–366 (GHRVPSWSSL…EKTMQKARRR (337 aa)) constitute a propeptide that is removed on maturation. N-linked (GlcNAc...) asparagine glycosylation is found at Asn114, Asn152, and Asn277. Disordered stretches follow at residues 268-305 (GDFE…LDER) and 330-358 (PRTG…FDEK). 3 disulfide bridges follow: Cys374-Cys441, Cys403-Cys473, and Cys407-Cys475. A glycan (N-linked (GlcNAc...) asparagine) is linked at Asn467.

The protein belongs to the TGF-beta family. Homodimer or heterodimer. Can form a non-covalent complex of the mature region and the pro-region. In terms of tissue distribution, costa, costicartilage, femur, calvaria, trachea, aorta and brain. Predominantly in the cerebellum.

Its subcellular location is the secreted. Growth factor involved in osteogenesis and adipogenesis. Plays an inhibitory role in the process of osteoblast differentiation via SMAD2/3 pathway. Plays an inhibitory role in the process of adipogenesis. The protein is Growth/differentiation factor 10 of Rattus norvegicus (Rat).